Consider the following 276-residue polypeptide: Orotidine 5'-phosphate decarboxylase (276 aa).

The Proton donor role is filled by Lys95.

This sequence belongs to the OMP decarboxylase family. Type 2 subfamily.

The catalysed reaction is orotidine 5'-phosphate + H(+) = UMP + CO2. It participates in pyrimidine metabolism; UMP biosynthesis via de novo pathway; UMP from orotate: step 2/2. This is Orotidine 5'-phosphate decarboxylase (pyrF) from Mycolicibacterium smegmatis (strain ATCC 700084 / mc(2)155) (Mycobacterium smegmatis).